A 292-amino-acid polypeptide reads, in one-letter code: Small ribosomal subunit protein uS3 (292 aa).

The 72-residue stretch at I39 to K110 folds into the KH type-2 domain. A disordered region spans residues K247 to T268.

This sequence belongs to the universal ribosomal protein uS3 family. In terms of assembly, part of the 30S ribosomal subunit. Forms a tight complex with proteins S10 and S14.

Functionally, binds the lower part of the 30S subunit head. Binds mRNA in the 70S ribosome, positioning it for translation. The polypeptide is Small ribosomal subunit protein uS3 (Borrelia garinii subsp. bavariensis (strain ATCC BAA-2496 / DSM 23469 / PBi) (Borreliella bavariensis)).